Reading from the N-terminus, the 496-residue chain is Beta-N-acetylhexosaminidase (496 aa).

The active-site Proton donor is glutamate 298.

The protein belongs to the glycosyl hydrolase 20 family.

The enzyme catalyses Hydrolysis of terminal non-reducing N-acetyl-D-hexosamine residues in N-acetyl-beta-D-hexosaminides.. Its pathway is glycan degradation; chitin degradation. Catalyzes the cleavage of beta-N-acetylglucosaminides and beta-N-acetylgalactosaminides. Also catalyzes the hydrolysis of N-acetylchitooligomers. May be involved in chitin degradation. It is not able to cleave beta-glucosides. This Cellulomonas fimi protein is Beta-N-acetylhexosaminidase (hex20).